The sequence spans 230 residues: Flagellar L-ring protein (230 aa).

The signal sequence occupies residues 1 to 21 (MMLKTVLRLPVCAALLALAAG). Cysteine 22 is lipidated: N-palmitoyl cysteine. Cysteine 22 carries the S-diacylglycerol cysteine lipid modification. The interval 34-53 (PLTAPPPPPPQPSARPNGSI) is disordered. Residues 36 to 46 (TAPPPPPPQPS) show a composition bias toward pro residues.

Belongs to the FlgH family. The basal body constitutes a major portion of the flagellar organelle and consists of four rings (L,P,S, and M) mounted on a central rod.

It localises to the cell outer membrane. The protein resides in the bacterial flagellum basal body. In terms of biological role, assembles around the rod to form the L-ring and probably protects the motor/basal body from shearing forces during rotation. This is Flagellar L-ring protein from Bordetella bronchiseptica (strain ATCC BAA-588 / NCTC 13252 / RB50) (Alcaligenes bronchisepticus).